The following is a 110-amino-acid chain: Iron-sulfur cluster insertion protein ErpA (110 aa).

3 residues coordinate iron-sulfur cluster: Cys-38, Cys-102, and Cys-104.

This sequence belongs to the HesB/IscA family. In terms of assembly, homodimer. Requires iron-sulfur cluster as cofactor.

In terms of biological role, required for insertion of 4Fe-4S clusters for at least IspG. This chain is Iron-sulfur cluster insertion protein ErpA, found in Marinobacter nauticus (strain ATCC 700491 / DSM 11845 / VT8) (Marinobacter aquaeolei).